Reading from the N-terminus, the 208-residue chain is 3-demethoxyubiquinol 3-hydroxylase (208 aa).

Residues Glu-57, Glu-87, His-90, Glu-139, Glu-171, and His-174 each contribute to the Fe cation site.

It belongs to the COQ7 family. Fe cation serves as cofactor.

The protein localises to the cell membrane. The enzyme catalyses a 5-methoxy-2-methyl-3-(all-trans-polyprenyl)benzene-1,4-diol + AH2 + O2 = a 3-demethylubiquinol + A + H2O. The protein operates within cofactor biosynthesis; ubiquinone biosynthesis. In terms of biological role, catalyzes the hydroxylation of 2-nonaprenyl-3-methyl-6-methoxy-1,4-benzoquinol during ubiquinone biosynthesis. The sequence is that of 3-demethoxyubiquinol 3-hydroxylase from Nitrosomonas europaea (strain ATCC 19718 / CIP 103999 / KCTC 2705 / NBRC 14298).